A 191-amino-acid polypeptide reads, in one-letter code: dCTP deaminase (191 aa).

DCTP contacts are provided by residues 112–117 (KSTYAR), 136–138 (TLE), Gln157, Tyr173, and Gln183. The active-site Proton donor/acceptor is Glu138.

The protein belongs to the dCTP deaminase family. Homotrimer.

The catalysed reaction is dCTP + H2O + H(+) = dUTP + NH4(+). It functions in the pathway pyrimidine metabolism; dUMP biosynthesis; dUMP from dCTP (dUTP route): step 1/2. Its function is as follows. Catalyzes the deamination of dCTP to dUTP. The protein is dCTP deaminase of Xylella fastidiosa (strain 9a5c).